A 185-amino-acid polypeptide reads, in one-letter code: MANEVIEKAKDNMKKSIAVFQKELGGIRAGVANASLLEGIKVDYYGVPTPLTQMSSVSIPEARVLMVTPYDKSSLDDIEHAILASDLGITPANDGTVIRIVIPQLTGERRQEIAKQVGKLAEKGKIAVRNVRRDAMDTLKRQEKNGDITEDEQRSLEKQVQKVTDDATKEIDKLADQKSQEITQG.

A compositionally biased stretch (basic and acidic residues) spans 138 to 179; sequence TLKRQEKNGDITEDEQRSLEKQVQKVTDDATKEIDKLADQKS. Residues 138 to 185 are disordered; sequence TLKRQEKNGDITEDEQRSLEKQVQKVTDDATKEIDKLADQKSQEITQG.

This sequence belongs to the RRF family.

It localises to the cytoplasm. Its function is as follows. Responsible for the release of ribosomes from messenger RNA at the termination of protein biosynthesis. May increase the efficiency of translation by recycling ribosomes from one round of translation to another. The chain is Ribosome-recycling factor from Lactobacillus gasseri (strain ATCC 33323 / DSM 20243 / BCRC 14619 / CIP 102991 / JCM 1131 / KCTC 3163 / NCIMB 11718 / NCTC 13722 / AM63).